Here is a 109-residue protein sequence, read N- to C-terminus: Mitochondrial import inner membrane translocase subunit TIM12 (109 aa).

Residue Ser2 is modified to N-acetylserine. A Twin CX3C motif motif is present at residues 40–66 (CLEKCIPHEGFGEPDLTKGEQCCIDRC). 2 cysteine pairs are disulfide-bonded: Cys40/Cys66 and Cys44/Cys62.

This sequence belongs to the small Tim family. In terms of assembly, component of the TIM22 complex, whose core is composed of TIM18, TIM22 and TIM54, associated with the peripheral proteins MRS5/TIM12 and the 70 kDa heterohexamer composed of TIM9 and TIM10 (or TIM8 and TIM13). Interacts directly with both the TIM22 protein and the TIM9-TIM10 heterohexamer. Interacts with multi-pass transmembrane proteins in transit.

It is found in the mitochondrion inner membrane. The protein localises to the mitochondrion intermembrane space. Its function is as follows. Essential component of the TIM22 complex, a complex that mediates the import and insertion of multi-pass transmembrane proteins into the mitochondrial inner membrane. The TIM22 complex forms a twin-pore translocase that uses the membrane potential as external driving force. In the TIM22 complex, it acts as a docking point for the soluble TIM9-TIM10 heterohexamer that guides the target proteins in transit through the aqueous mitochondrial intermembrane space. In Saccharomyces cerevisiae (strain ATCC 204508 / S288c) (Baker's yeast), this protein is Mitochondrial import inner membrane translocase subunit TIM12 (TIM12).